Reading from the N-terminus, the 63-residue chain is MVQRCALVVLLVVAVAAALCSAQLNFTPNWGTGKRDAADFADPYSFLYRLIQAEARKMSGCSN.

The first 22 residues, 1 to 22 (MVQRCALVVLLVVAVAAALCSA), serve as a signal peptide directing secretion. Pyrrolidone carboxylic acid is present on Q23. The residue at position 32 (T32) is a Threonine amide.

The protein belongs to the AKH/HRTH/RPCH family.

The protein resides in the secreted. Its function is as follows. This hormone, released from cells in the corpora cardiaca, causes release of diglycerides from the fat body and stimulation of muscles to use these diglycerides as an energy source during energy-demanding processes. The sequence is that of Adipokinetic prohormone type 1 from Locusta migratoria (Migratory locust).